A 217-amino-acid chain; its full sequence is Phosphatase MT3486 (217 aa).

The Nucleophile role is filled by D9.

The protein belongs to the HAD-like hydrolase superfamily.

Able to hydrolyze geranyl diphosphate (GPP), farnesyl diphosphate (FPP) and geranylgeranyl diphosphate (GGPP) to respectively yield geraniol, farnesol and geranylgeraniol. This is Phosphatase MT3486 from Mycobacterium tuberculosis (strain CDC 1551 / Oshkosh).